We begin with the raw amino-acid sequence, 175 residues long: MVRIFLTGYMGAGKTTLGKAFARKLNVPFIDLDWYIEERFHKTVGELFTERGEAGFRELERNMLHEVAEFENVVISTGGGAPCFYDNMEFMNRTGKTVFLNVHPDVLFRRLRIAKQQRPILQGKEDDELMDFIIQALEKRAPFYTQAQYIFNADELEDRWQIESSVQRLQELLEL.

11 to 16 (GAGKTT) serves as a coordination point for ATP. T15 serves as a coordination point for Mg(2+). Residues D33, R57, and G79 each contribute to the substrate site. Residue R118 participates in ATP binding. R140 contacts substrate.

The protein belongs to the shikimate kinase family. Monomer. Requires Mg(2+) as cofactor.

The protein resides in the cytoplasm. It carries out the reaction shikimate + ATP = 3-phosphoshikimate + ADP + H(+). It participates in metabolic intermediate biosynthesis; chorismate biosynthesis; chorismate from D-erythrose 4-phosphate and phosphoenolpyruvate: step 5/7. Functionally, catalyzes the specific phosphorylation of the 3-hydroxyl group of shikimic acid using ATP as a cosubstrate. In Bacteroides thetaiotaomicron (strain ATCC 29148 / DSM 2079 / JCM 5827 / CCUG 10774 / NCTC 10582 / VPI-5482 / E50), this protein is Shikimate kinase.